Here is a 69-residue protein sequence, read N- to C-terminus: Large ribosomal subunit protein bL28 (69 aa).

The protein belongs to the bacterial ribosomal protein bL28 family.

The chain is Large ribosomal subunit protein bL28 from Nitratidesulfovibrio vulgaris (strain ATCC 29579 / DSM 644 / CCUG 34227 / NCIMB 8303 / VKM B-1760 / Hildenborough) (Desulfovibrio vulgaris).